The following is a 275-amino-acid chain: 2,3,4,5-tetrahydropyridine-2,6-dicarboxylate N-succinyltransferase (275 aa).

The substrate site is built by Arg106 and Asp143.

It belongs to the transferase hexapeptide repeat family. As to quaternary structure, homotrimer.

It is found in the cytoplasm. It carries out the reaction (S)-2,3,4,5-tetrahydrodipicolinate + succinyl-CoA + H2O = (S)-2-succinylamino-6-oxoheptanedioate + CoA. It functions in the pathway amino-acid biosynthesis; L-lysine biosynthesis via DAP pathway; LL-2,6-diaminopimelate from (S)-tetrahydrodipicolinate (succinylase route): step 1/3. The protein is 2,3,4,5-tetrahydropyridine-2,6-dicarboxylate N-succinyltransferase of Paraburkholderia xenovorans (strain LB400).